A 101-amino-acid chain; its full sequence is Small ribosomal subunit protein uS10 (101 aa).

The protein belongs to the universal ribosomal protein uS10 family. As to quaternary structure, part of the 30S ribosomal subunit.

Involved in the binding of tRNA to the ribosomes. This Mycobacteroides abscessus (strain ATCC 19977 / DSM 44196 / CCUG 20993 / CIP 104536 / JCM 13569 / NCTC 13031 / TMC 1543 / L948) (Mycobacterium abscessus) protein is Small ribosomal subunit protein uS10.